Here is a 141-residue protein sequence, read N- to C-terminus: Small ribosomal subunit protein uS11 (141 aa).

It belongs to the universal ribosomal protein uS11 family. Part of the 30S ribosomal subunit.

Functionally, located on the platform of the 30S subunit. The sequence is that of Small ribosomal subunit protein uS11 from Pyrobaculum calidifontis (strain DSM 21063 / JCM 11548 / VA1).